Here is a 537-residue protein sequence, read N- to C-terminus: Cytochrome P450 CYP12A2 (537 aa).

Cysteine 483 is a binding site for heme.

The protein belongs to the cytochrome P450 family. The cofactor is heme.

The sequence is that of Cytochrome P450 CYP12A2 (CYP12A2) from Musca domestica (House fly).